A 719-amino-acid chain; its full sequence is Phosphoribosylformylglycinamidine synthase subunit PurL (719 aa).

The active site involves His47. Residues Tyr50 and Lys89 each contribute to the ATP site. Residue Glu91 participates in Mg(2+) binding. Substrate-binding positions include 92-95 (SHNH) and Arg114. The active-site Proton acceptor is the His93. Mg(2+) is bound at residue Asp115. Gln238 contributes to the substrate binding site. Residue Asp266 participates in Mg(2+) binding. 310–312 (ESQ) serves as a coordination point for substrate. ATP is bound by residues Asp488 and Gly525. Mg(2+) is bound at residue Asn526. Ser528 is a binding site for substrate.

This sequence belongs to the FGAMS family. In terms of assembly, monomer. Part of the FGAM synthase complex composed of 1 PurL, 1 PurQ and 2 PurS subunits.

The protein resides in the cytoplasm. It carries out the reaction N(2)-formyl-N(1)-(5-phospho-beta-D-ribosyl)glycinamide + L-glutamine + ATP + H2O = 2-formamido-N(1)-(5-O-phospho-beta-D-ribosyl)acetamidine + L-glutamate + ADP + phosphate + H(+). The protein operates within purine metabolism; IMP biosynthesis via de novo pathway; 5-amino-1-(5-phospho-D-ribosyl)imidazole from N(2)-formyl-N(1)-(5-phospho-D-ribosyl)glycinamide: step 1/2. Functionally, part of the phosphoribosylformylglycinamidine synthase complex involved in the purines biosynthetic pathway. Catalyzes the ATP-dependent conversion of formylglycinamide ribonucleotide (FGAR) and glutamine to yield formylglycinamidine ribonucleotide (FGAM) and glutamate. The FGAM synthase complex is composed of three subunits. PurQ produces an ammonia molecule by converting glutamine to glutamate. PurL transfers the ammonia molecule to FGAR to form FGAM in an ATP-dependent manner. PurS interacts with PurQ and PurL and is thought to assist in the transfer of the ammonia molecule from PurQ to PurL. In Cereibacter sphaeroides (strain ATCC 17025 / ATH 2.4.3) (Rhodobacter sphaeroides), this protein is Phosphoribosylformylglycinamidine synthase subunit PurL.